The primary structure comprises 210 residues: ATP-dependent dethiobiotin synthetase BioD (210 aa).

12 to 17 (NVGKTH) serves as a coordination point for ATP. Thr-16 is a Mg(2+) binding site. Residue Lys-37 is part of the active site. Residue Thr-41 coordinates substrate. Glu-114 contacts Mg(2+). 114 to 117 (EGAG) is an ATP binding site.

The protein belongs to the dethiobiotin synthetase family. As to quaternary structure, homodimer. It depends on Mg(2+) as a cofactor.

It localises to the cytoplasm. It carries out the reaction (7R,8S)-7,8-diammoniononanoate + CO2 + ATP = (4R,5S)-dethiobiotin + ADP + phosphate + 3 H(+). Its pathway is cofactor biosynthesis; biotin biosynthesis; biotin from 7,8-diaminononanoate: step 1/2. Functionally, catalyzes a mechanistically unusual reaction, the ATP-dependent insertion of CO2 between the N7 and N8 nitrogen atoms of 7,8-diaminopelargonic acid (DAPA, also called 7,8-diammoniononanoate) to form a ureido ring. This is ATP-dependent dethiobiotin synthetase BioD from Sulfurovum sp. (strain NBC37-1).